The following is a 1230-amino-acid chain: Protein transport protein Sec31A (1230 aa).

7 WD repeats span residues 4–47 (KEID…EIFE), 64–111 (SSSH…AGDK), 120–160 (KHTG…TPMT), 166–206 (QPPE…PIIK), 209–254 (DHSN…SPLR), 258–298 (NHAR…VLYE), and 301–342 (TNTQ…DGLR). The segment at 161–470 (PGAKTQPPED…IEASQTEFEK (310 aa)) is interaction with SEC13. One copy of the WD 8; interaction with SEC13 repeat lies at 397-429 (SFSFGGKLVTFESVAVPLQQGAEQQRRQPVFIS). Asymmetric dimethylarginine is present on Arg-423. Phosphoserine occurs at positions 526 and 531. Lys-646 is covalently cross-linked (Glycyl lysine isopeptide (Lys-Gly) (interchain with G-Cter in ubiquitin)). Disordered regions lie at residues 789–905 (QGKP…ASNA) and 924–1104 (MYTA…PIGN). Ser-798 carries the phosphoserine modification. Positions 799–1123 (SQSPYERQPL…TEKITKKPIP (325 aa)) are interaction with PDCD6. The ALG-2-binding site motif-2 (ABS-2) motif lies at 841 to 847 (GFIMQGN). The segment covering 866-876 (QLPPYPQPQPY) has biased composition (pro residues). Composition is skewed to low complexity over residues 930-940 (ASSPTSSSAAS) and 959-975 (PSSS…GTPP). Polar residues-rich tracts occupy residues 981–995 (PASQ…QDQA) and 1033–1064 (PIMN…SFPQ). Residue Thr-1171 is modified to Phosphothreonine. Ser-1173 is subject to Phosphoserine. Lys-1227 participates in a covalent cross-link: Glycyl lysine isopeptide (Lys-Gly) (interchain with G-Cter in ubiquitin).

It belongs to the WD repeat SEC31 family. As to quaternary structure, COPII is composed of at least 5 proteins: the SEC23/24 complex, the SEC13/31 complex and SAR1. SEC13 and SEC31 make a 2:2 tetramer that forms the edge element of the COPII outer coat. The tetramer self-assembles in multiple copies to form the complete polyhedral cage. Interacts (via WD 8) with SEC13. Interacts with PDCD6; interaction takes place in response to cytosolic calcium increase and leads to bridge together the BCR(KLHL12) complex and SEC31A, leading to monoubiquitination. Interacts with KLHL12. Monoubiquitinated by the BCR(KLHL12) E3 ubiquitin ligase complex, leading to regulate the size of COPII coats.

It localises to the cytoplasm. The protein resides in the cytoplasmic vesicle. The protein localises to the COPII-coated vesicle membrane. Its subcellular location is the endoplasmic reticulum membrane. Functionally, component of the coat protein complex II (COPII) which promotes the formation of transport vesicles from the endoplasmic reticulum (ER). The coat has two main functions, the physical deformation of the endoplasmic reticulum membrane into vesicles and the selection of cargo molecules. This is Protein transport protein Sec31A (Sec31a) from Mus musculus (Mouse).